Reading from the N-terminus, the 554-residue chain is Endochitinase (554 aa).

An N-terminal signal peptide occupies residues 1–19 (MRATLATLAVLALATAVQS). The 376-residue stretch at 23–398 (ARIVCYFSNW…KILHKHMSSY (376 aa)) folds into the GH18 domain. Residues Cys27 and Cys52 are joined by a disulfide bond. 76–77 (LD) is a binding site for chitin. Asn85 carries N-linked (GlcNAc...) asparagine glycosylation. Residue 103–106 (GGWA) participates in chitin binding. The active-site Proton donor is the Glu146. Residues Tyr147 and 213 to 216 (MSYD) each bind chitin. The N-linked (GlcNAc...) asparagine glycan is linked to Asn303. Trp370 contributes to the chitin binding site. A disordered region spans residues 398-494 (YTVPPPHTEN…VPPTENEVDG (97 aa)). Residues 431-457 (PTTTTAKPASTTKTTVKTTTTTTAKPP) are compositionally biased toward low complexity. Basic and acidic residues predominate over residues 467–477 (INVRPEPKPEP). Positions 495–553 (SEICNSDQDYIPDKKHCDKYWRCVNGEAMQFSCQHGTVFNVELNVCDWPSNATRRECQQ) constitute a Chitin-binding type-2 domain. Cys527 and Cys540 are joined by a disulfide. N-linked (GlcNAc...) asparagine glycosylation occurs at Asn545.

This sequence belongs to the glycosyl hydrolase 18 family. Chitinase class II subfamily. Epidermis and gut.

The protein localises to the secreted. The catalysed reaction is Random endo-hydrolysis of N-acetyl-beta-D-glucosaminide (1-&gt;4)-beta-linkages in chitin and chitodextrins.. Its function is as follows. Digests chitin in the exoskeleton during the molting process. This Manduca sexta (Tobacco hawkmoth) protein is Endochitinase.